The sequence spans 132 residues: Large ribosomal subunit protein uL14 (132 aa).

It belongs to the universal ribosomal protein uL14 family. As to quaternary structure, part of the 50S ribosomal subunit. Forms a cluster with proteins L3 and L24e, part of which may contact the 16S rRNA in 2 intersubunit bridges.

Its function is as follows. Binds to 23S rRNA. Forms part of two intersubunit bridges in the 70S ribosome. The polypeptide is Large ribosomal subunit protein uL14 (Halorubrum lacusprofundi (strain ATCC 49239 / DSM 5036 / JCM 8891 / ACAM 34)).